Here is a 231-residue protein sequence, read N- to C-terminus: Proteasome subunit alpha type-2 (231 aa).

Belongs to the peptidase T1A family. In terms of assembly, the 26S proteasome consists of a 20S proteasome core and two 19S regulatory subunits. The 20S proteasome core is composed of 28 subunits that are arranged in four stacked rings, resulting in a barrel-shaped structure. The two end rings are each formed by seven alpha subunits, and the two central rings are each formed by seven beta subunits. The catalytic chamber with the active sites is on the inside of the barrel.

It localises to the cytoplasm. The protein localises to the nucleus. The proteasome is a multicatalytic proteinase complex which is characterized by its ability to cleave peptides with Arg, Phe, Tyr, Leu, and Glu adjacent to the leaving group at neutral or slightly basic pH. The proteasome has an ATP-dependent proteolytic activity. The sequence is that of Proteasome subunit alpha type-2 from Trypanosoma brucei brucei.